We begin with the raw amino-acid sequence, 175 residues long: Catabolic 3-dehydroquinase (175 aa).

The Proton acceptor role is filled by Tyr23. The substrate site is built by Asn74, His80, and Asp87. His100 serves as the catalytic Proton donor. Substrate is bound by residues 101-102 and Arg111; that span reads IS.

The protein belongs to the type-II 3-dehydroquinase family. As to quaternary structure, homododecamer. Adopts a ring-like structure, composed of an arrangement of two hexameric rings stacked on top of one another.

It carries out the reaction 3-dehydroquinate = 3-dehydroshikimate + H2O. The protein operates within aromatic compound metabolism; 3,4-dihydroxybenzoate biosynthesis; 3,4-dihydroxybenzoate from 3-dehydroquinate: step 1/2. Is involved in the catabolism of quinate. Allows the utilization of quinate as carbon source via the beta-ketoadipate pathway. In Talaromyces marneffei (strain ATCC 18224 / CBS 334.59 / QM 7333) (Penicillium marneffei), this protein is Catabolic 3-dehydroquinase.